We begin with the raw amino-acid sequence, 81 residues long: Toxin-like peptide AaF1CA5 (81 aa).

A signal peptide spans 1-22; that stretch reads MMKLMLFSIIVILFSLIGSIHG. In terms of domain architecture, LCN-type CS-alpha/beta spans 25–81; sequence VPGNYPLDSSDDTYLCAPLGENPFCIKICRKHGVKYGLMLRLPCWCEYFGKIKNVKI. 2 cysteine pairs are disulfide-bonded: C49/C68 and C53/C70.

The protein belongs to the long (3 C-C) scorpion toxin superfamily. As to expression, expressed by the venom gland.

The protein localises to the secreted. In terms of biological role, probable neurotoxin that inhibits ion channels. The chain is Toxin-like peptide AaF1CA5 from Androctonus australis (Sahara scorpion).